We begin with the raw amino-acid sequence, 147 residues long: UPF0260 protein PMI1174 (147 aa).

Belongs to the UPF0260 family.

The polypeptide is UPF0260 protein PMI1174 (Proteus mirabilis (strain HI4320)).